Here is a 365-residue protein sequence, read N- to C-terminus: IgG receptor FcRn large subunit p51 (365 aa).

Positions 1–21 are cleaved as a signal peptide; sequence MGMPLPWALSLLLVLLPQTWG. The segment at 22–110 is alpha-1; the sequence is SETRPPLMYH…KTLEKILNGT (89 aa). Topologically, residues 22-297 are extracellular; sequence SETRPPLMYH…VDLDSSARSS (276 aa). Asn-108, Asn-125, Asn-149, and Asn-246 each carry an N-linked (GlcNAc...) asparagine glycan. The alpha-2 stretch occupies residues 111 to 200; it reads YTLQGLLGCE…ERGRRNLEWK (90 aa). Cystine bridges form between Cys-119-Cys-182 and Cys-221-Cys-275. An alpha-3 region spans residues 201 to 290; the sequence is EPPSMRLKAR…GLAQPLTVDL (90 aa). Residues 202-289 enclose the Ig-like C1-type domain; the sequence is PPSMRLKARP…EGLAQPLTVD (88 aa). The tract at residues 291-297 is connecting peptide; sequence DSSARSS. A helical membrane pass occupies residues 298–321; it reads VPVVGIVLGLLLVVVAIAGGVLLW. The Cytoplasmic portion of the chain corresponds to 322–365; sequence GRMRSGLPAPWLSLSGDDSGDLLPGGNLPPEAEPQGANAFPATS. Position 334 is a phosphoserine (Ser-334). Residues 343–365 form a disordered region; it reads LLPGGNLPPEAEPQGANAFPATS.

Belongs to the immunoglobulin superfamily. FcRn complex consists of two subunits: p51, and p14 which is equivalent to beta-2-microglobulin. It forms an MHC class I-like heterodimer. Interacts with albumin/ALB; this interaction regulates ALB homeostasis. Intestinal epithelium of suckling rodents. Expressed in neonatal intestine and fetal yolk sac.

It is found in the cell membrane. Its subcellular location is the endosome membrane. Functionally, cell surface receptor that transfers passive humoral immunity from the mother to the newborn. Binds to the Fc region of monomeric immunoglobulin gamma and mediates its selective uptake from milk. IgG in the milk is bound at the apical surface of the intestinal epithelium. The resultant FcRn-IgG complexes are transcytosed across the intestinal epithelium and IgG is released from FcRn into blood or tissue fluids. Throughout life, contributes to effective humoral immunity by recycling IgG and extending its half-life in the circulation. Mechanistically, monomeric IgG binding to FcRn in acidic endosomes of endothelial and hematopoietic cells recycles IgG to the cell surface where it is released into the circulation. In addition of IgG, regulates homeostasis of the other most abundant circulating protein albumin/ALB. The polypeptide is IgG receptor FcRn large subunit p51 (Fcgrt) (Mus musculus (Mouse)).